A 2939-amino-acid chain; its full sequence is Serine/threonine-protein kinase tel1 (2939 aa).

3 disordered regions span residues 193–212, 695–718, and 859–886; these read GTSV…RAGS, PPED…AADS, and KTRR…ETRK. The segment covering 697-715 has biased composition (basic and acidic residues); it reads EDSHKATSTDQPKREEIRA. In terms of domain architecture, FAT spans 1869–2471; that stretch reads IAAAAATRCG…MYQIWSGVKA (603 aa). The PI3K/PI4K catalytic domain maps to 2577–2890; that stretch reads FEPQMSIASG…DKKSTKNLNE (314 aa). Residues 2583 to 2589 are G-loop; sequence IASGVSA. The tract at residues 2755 to 2763 is catalytic loop; the sequence is GLGDRHGHN. An activation loop region spans residues 2775–2799; that stretch reads HIDLGVAFELGRILPVPELVPFRLT. The tract at residues 2869 to 2894 is disordered; the sequence is DVVEAEDERRAGDKKSTKNLNEPSEA. The segment covering 2875–2884 has biased composition (basic and acidic residues); that stretch reads DERRAGDKKS. In terms of domain architecture, FATC spans 2907–2939; that stretch reads KTLSVMATVNDLINQATDERNLAVLFCGWAAYA.

It belongs to the PI3/PI4-kinase family. ATM subfamily. As to quaternary structure, associates with DNA double-strand breaks.

It localises to the nucleus. The protein localises to the chromosome. The protein resides in the telomere. It catalyses the reaction L-seryl-[protein] + ATP = O-phospho-L-seryl-[protein] + ADP + H(+). The catalysed reaction is L-threonyl-[protein] + ATP = O-phospho-L-threonyl-[protein] + ADP + H(+). Its function is as follows. Serine/threonine protein kinase which activates checkpoint signaling upon genotoxic stresses such as ionizing radiation (IR), ultraviolet light (UV), or DNA replication stalling, thereby acting as a DNA damage sensor. Recognizes the substrate consensus sequence [ST]-Q. Phosphorylates histone H2A to form H2AS128ph (gamma-H2A) at sites of DNA damage, involved in the regulation of DNA damage response mechanism. Required for the control of telomere length and genome stability. The chain is Serine/threonine-protein kinase tel1 (mus-21) from Neurospora crassa (strain ATCC 24698 / 74-OR23-1A / CBS 708.71 / DSM 1257 / FGSC 987).